A 119-amino-acid chain; its full sequence is Beta-2-microglobulin (119 aa).

The signal sequence occupies residues 1–20 (MGRFVAVALLVLLSLSGLET). One can recognise an Ig-like C1-type domain in the interval 25–114 (PKIQVYSRHP…VTFSTPKTVK (90 aa)). A disulfide bridge connects residues Cys45 and Cys100.

Belongs to the beta-2-microglobulin family. As to quaternary structure, heterodimer of an alpha chain and a beta chain. Beta-2-microglobulin is the beta-chain of major histocompatibility complex class I molecules.

The protein resides in the secreted. Component of the class I major histocompatibility complex (MHC). Involved in the presentation of peptide antigens to the immune system. The chain is Beta-2-microglobulin (B2M) from Callicebus personatus nigrifrons (Black-fronted titi).